The sequence spans 311 residues: Thymidylate synthase (311 aa).

DUMP contacts are provided by residues Arg28 and 172-173 (RR). The active-site Nucleophile is Cys192. Residues 213-216 (RSCD), Asn224, and 254-256 (HLY) each bind dUMP. Position 216 (Asp216) interacts with (6R)-5,10-methylene-5,6,7,8-tetrahydrofolate. (6R)-5,10-methylene-5,6,7,8-tetrahydrofolate is bound at residue Ala310.

It belongs to the thymidylate synthase family. Bacterial-type ThyA subfamily. As to quaternary structure, homodimer.

It localises to the cytoplasm. It catalyses the reaction dUMP + (6R)-5,10-methylene-5,6,7,8-tetrahydrofolate = 7,8-dihydrofolate + dTMP. Its pathway is pyrimidine metabolism; dTTP biosynthesis. Its function is as follows. Catalyzes the reductive methylation of 2'-deoxyuridine-5'-monophosphate (dUMP) to 2'-deoxythymidine-5'-monophosphate (dTMP) while utilizing 5,10-methylenetetrahydrofolate (mTHF) as the methyl donor and reductant in the reaction, yielding dihydrofolate (DHF) as a by-product. This enzymatic reaction provides an intracellular de novo source of dTMP, an essential precursor for DNA biosynthesis. In Sphingopyxis alaskensis (strain DSM 13593 / LMG 18877 / RB2256) (Sphingomonas alaskensis), this protein is Thymidylate synthase.